The sequence spans 353 residues: UDP-N-acetylglucosamine--N-acetylmuramyl-(pentapeptide) pyrophosphoryl-undecaprenol N-acetylglucosamine transferase (353 aa).

UDP-N-acetyl-alpha-D-glucosamine is bound by residues 10 to 12, N124, S183, and Q283; that span reads TGG.

Belongs to the glycosyltransferase 28 family. MurG subfamily.

It localises to the cell inner membrane. The catalysed reaction is di-trans,octa-cis-undecaprenyl diphospho-N-acetyl-alpha-D-muramoyl-L-alanyl-D-glutamyl-meso-2,6-diaminopimeloyl-D-alanyl-D-alanine + UDP-N-acetyl-alpha-D-glucosamine = di-trans,octa-cis-undecaprenyl diphospho-[N-acetyl-alpha-D-glucosaminyl-(1-&gt;4)]-N-acetyl-alpha-D-muramoyl-L-alanyl-D-glutamyl-meso-2,6-diaminopimeloyl-D-alanyl-D-alanine + UDP + H(+). The protein operates within cell wall biogenesis; peptidoglycan biosynthesis. Its function is as follows. Cell wall formation. Catalyzes the transfer of a GlcNAc subunit on undecaprenyl-pyrophosphoryl-MurNAc-pentapeptide (lipid intermediate I) to form undecaprenyl-pyrophosphoryl-MurNAc-(pentapeptide)GlcNAc (lipid intermediate II). The polypeptide is UDP-N-acetylglucosamine--N-acetylmuramyl-(pentapeptide) pyrophosphoryl-undecaprenol N-acetylglucosamine transferase (Helicobacter pylori (strain J99 / ATCC 700824) (Campylobacter pylori J99)).